Consider the following 208-residue polypeptide: Interleukin-6 (208 aa).

The first 29 residues, 1-29, serve as a signal peptide directing secretion; that stretch reads MNSRFTSAFTPFAVSLGLLLVMTSAFPTP. The N-linked (GlcNAc...) asparagine glycan is linked to asparagine 38. Residues cysteine 72 and cysteine 78 are joined by a disulfide bond. At serine 81 the chain carries Phosphoserine. An intrachain disulfide couples cysteine 101 to cysteine 111.

It belongs to the IL-6 superfamily. In terms of assembly, component of a hexamer of two molecules each of IL6, IL6R and IL6ST; first binds to IL6R to associate with the signaling subunit IL6ST. Interacts with IL6R (via the N-terminal ectodomain); this interaction may be affected by IL6R-binding with SORL1, hence decreasing IL6 cis signaling. Interacts with SORL1 (via the N-terminal ectodomain); this interaction leads to IL6 internalization and lysosomal degradation. May form a trimeric complex with the soluble SORL1 ectodomain and soluble IL6R receptor; this interaction might stabilize circulating IL6, hence promoting IL6 trans signaling.

The protein resides in the secreted. Its function is as follows. Cytokine with a wide variety of biological functions in immunity, tissue regeneration, and metabolism. Binds to IL6R, then the complex associates to the signaling subunit IL6ST/gp130 to trigger the intracellular IL6-signaling pathway. The interaction with the membrane-bound IL6R and IL6ST stimulates 'classic signaling', whereas the binding of IL6 and soluble IL6R to IL6ST stimulates 'trans-signaling'. Alternatively, 'cluster signaling' occurs when membrane-bound IL6:IL6R complexes on transmitter cells activate IL6ST receptors on neighboring receiver cells. Functionally, IL6 is a potent inducer of the acute phase response. Rapid production of IL6 contributes to host defense during infection and tissue injury, but excessive IL6 synthesis is involved in disease pathology. In the innate immune response, is synthesized by myeloid cells, such as macrophages and dendritic cells, upon recognition of pathogens through toll-like receptors (TLRs) at the site of infection or tissue injury. In the adaptive immune response, is required for the differentiation of B cells into immunoglobulin-secreting cells. Plays a major role in the differentiation of CD4(+) T cell subsets. Essential factor for the development of T follicular helper (Tfh) cells that are required for the induction of germinal-center formation. Required to drive naive CD4(+) T cells to the Th17 lineage. Also required for proliferation of myeloma cells and the survival of plasmablast cells. In terms of biological role, acts as an essential factor in bone homeostasis and on vessels directly or indirectly by induction of VEGF, resulting in increased angiogenesis activity and vascular permeability. Induces, through 'trans-signaling' and synergistically with IL1B and TNF, the production of VEGF. Involved in metabolic controls, is discharged into the bloodstream after muscle contraction increasing lipolysis and improving insulin resistance. 'Trans-signaling' in central nervous system also regulates energy and glucose homeostasis. Mediates, through GLP-1, crosstalk between insulin-sensitive tissues, intestinal L cells and pancreatic islets to adapt to changes in insulin demand. Also acts as a myokine. Plays a protective role during liver injury, being required for maintenance of tissue regeneration. Also has a pivotal role in iron metabolism by regulating HAMP/hepcidin expression upon inflammation or bacterial infection. Through activation of IL6ST-YAP-NOTCH pathway, induces inflammation-induced epithelial regeneration. This is Interleukin-6 (IL6) from Bos taurus (Bovine).